The primary structure comprises 352 residues: C-C chemokine receptor type 5 (352 aa).

Topologically, residues 1-30 (MDYQVSSPTYDIDYYTSEPCQKINVKQIAA) are extracellular. At Tyr-3 the chain carries Sulfotyrosine. O-linked (GalNAc...) serine glycosylation is found at Ser-6 and Ser-7. Tyr-10, Tyr-14, and Tyr-15 each carry sulfotyrosine. Cystine bridges form between Cys-20-Cys-269 and Cys-101-Cys-178. The helical transmembrane segment at 31–58 (HLLPPLYSLVFIFGFVGNILVVLILINC) threads the bilayer. Over 59–68 (KRLKSMTDIY) the chain is Cytoplasmic. A helical membrane pass occupies residues 69 to 89 (LLNLAISDLLFLLTVPFWAHY). The Extracellular segment spans residues 90–102 (AAAQWDFGNIMCQ). A helical membrane pass occupies residues 103–124 (LLTGLYFIGFFSGIFFIILLTI). Residues 125–141 (DRYLAIVHAVFALKART) lie on the Cytoplasmic side of the membrane. The chain crosses the membrane as a helical span at residues 142–166 (VTFGVVTSVITWVVAVFASLPGIIF). The Extracellular segment spans residues 167-198 (TRSQREGLHYTCSSHFPYSQYQFWKNFRTLKI). Residues 199–218 (VILGLVLPLLVMVICYSGIL) form a helical membrane-spanning segment. Residues 219 to 235 (KTLLRCRNEKKRHRAVR) lie on the Cytoplasmic side of the membrane. A helical membrane pass occupies residues 236–260 (LIFTIMIVYFLFWAPYNIVLLLNTF). Residues 261-277 (QEFFGLNNCSSSNRLDQ) are Extracellular-facing. Residues 278–301 (AMQVTETLGMTHCCINPIIYAFVG) traverse the membrane as a helical segment. Over 302 to 352 (EKFRNYLLVFFQKHIAKRFCKCCSIFQQEAPERASSVYTRSTGEQEISVGL) the chain is Cytoplasmic. Residues Cys-321, Cys-323, and Cys-324 are each lipidated (S-palmitoyl cysteine). Phosphoserine; by BARK1 occurs at positions 336, 337, 342, and 349.

The protein belongs to the G-protein coupled receptor 1 family. In terms of assembly, interacts with PRAF2. Efficient ligand binding to CCL3/MIP-1alpha and CCL4/MIP-1beta requires sulfation, O-glycosylation and sialic acid modifications. Glycosylation on Ser-6 is required for efficient binding of CCL4. Interacts with GRK2. Interacts with ARRB1 and ARRB2. Interacts with CNIH4. Interacts with S100A4; this interaction stimulates T-lymphocyte chemotaxis. In terms of processing, sulfated on at least 2 of the N-terminal tyrosines. Sulfation is required for efficient binding of the chemokines, CCL3 and CCL4. Palmitoylation in the C-terminal is important for cell surface expression. Post-translationally, phosphorylation on serine residues in the C-terminal is stimulated by binding CC chemokines especially by APO-RANTES. In terms of processing, O-glycosylated, but not N-glycosylated. Ser-6 appears to be the major site even if Ser-7 may be also O-glycosylated. Also sialylated glycans present which contribute to chemokine binding. Thr-16 and Ser-17 may also be glycosylated and, if so, with small moieties such as a T-antigen.

The protein resides in the cell membrane. Its function is as follows. Receptor for a number of inflammatory CC-chemokines including CCL3/MIP-1-alpha, CCL4/MIP-1-beta and RANTES and subsequently transduces a signal by increasing the intracellular calcium ion level. May play a role in the control of granulocytic lineage proliferation or differentiation. Participates in T-lymphocyte migration to the infection site by acting as a chemotactic receptor. The sequence is that of C-C chemokine receptor type 5 (CCR5) from Mandrillus sphinx (Mandrill).